The following is a 410-amino-acid chain: Serine proteinase inhibitor A3K (410 aa).

A signal peptide spans 1-24 (MPSAISRGLLLLAGLCYLVFGIMA). 5 N-linked (GlcNAc...) asparagine glycosylation sites follow: asparagine 62, asparagine 99, asparagine 162, asparagine 229, and asparagine 263. The segment at 360–381 (GTEAAAATVLEATRTARPPRLS) is RCL.

Belongs to the serpin family.

The protein localises to the secreted. It localises to the extracellular space. Its function is as follows. Contrapsin inhibits trypsin-like proteases. In Cavia porcellus (Guinea pig), this protein is Serine proteinase inhibitor A3K (SERPINA3K).